Reading from the N-terminus, the 507-residue chain is MSGLASKAKSRVKSSKGKNSTNIHADELNEDVGVVVRVMTAVVDVKFASGKIPKILNALESKEIYNGKKLVLEVSQHISDSIVRCIALDGTDGLSRNDKFIDTGAPISVPVGRGTLGRVFDVLGNTIDECGPLEESSYFIKQIYSEIPKLTDQKIATEILVTGIKVIDLLAPYLKGGKVGLFGGAGVGKTVLIMELIHNIAKAHKGVSVFAGVGERTREGNDLYHEMIESGVINLENKDQSQAVLVYGQMNEPPGARLRVALSALTMAEYFRDAENQDVLFFVDNIFRFTQSGSEISALLGRIPSAVGYQPTLAAEMGAMQERITSTNSGSITSVQAIYVPADDLTDPAPATSFAHLDSTTVLSRQISELGIYPAVDPLDSTSQALSADVVGKEHYDVAKEVQRILQTYKSLQDIIAILGMDELSEEDKLIVARARKIQRFLSQPFHVAEVFTGAPGKFVSLEDTVLSFKGLVEGKYDHLPEAAFYMVGSIDDVIKKAELLQKEGKV.

Positions 1 to 22 are disordered; that stretch reads MSGLASKAKSRVKSSKGKNSTN. An ATP-binding site is contributed by 183-190; the sequence is GGAGVGKT.

Belongs to the ATPase alpha/beta chains family. In terms of assembly, F-type ATPases have 2 components, CF(1) - the catalytic core - and CF(0) - the membrane proton channel. CF(1) has five subunits: alpha(3), beta(3), gamma(1), delta(1), epsilon(1). CF(0) has three main subunits: a(1), b(2) and c(9-12). The alpha and beta chains form an alternating ring which encloses part of the gamma chain. CF(1) is attached to CF(0) by a central stalk formed by the gamma and epsilon chains, while a peripheral stalk is formed by the delta and b chains.

It is found in the cell inner membrane. The catalysed reaction is ATP + H2O + 4 H(+)(in) = ADP + phosphate + 5 H(+)(out). Its function is as follows. Produces ATP from ADP in the presence of a proton gradient across the membrane. The catalytic sites are hosted primarily by the beta subunits. The sequence is that of ATP synthase subunit beta from Ehrlichia chaffeensis (strain ATCC CRL-10679 / Arkansas).